The chain runs to 1249 residues: DNA-directed RNA polymerase subunit beta (1249 aa).

It belongs to the RNA polymerase beta chain family. As to quaternary structure, the RNAP catalytic core consists of 2 alpha, 1 beta, 1 beta' and 1 omega subunit. When a sigma factor is associated with the core the holoenzyme is formed, which can initiate transcription.

The catalysed reaction is RNA(n) + a ribonucleoside 5'-triphosphate = RNA(n+1) + diphosphate. In terms of biological role, DNA-dependent RNA polymerase catalyzes the transcription of DNA into RNA using the four ribonucleoside triphosphates as substrates. The protein is DNA-directed RNA polymerase subunit beta of Clostridium botulinum (strain Eklund 17B / Type B).